A 486-amino-acid chain; its full sequence is Glutamyl-tRNA(Gln) amidotransferase subunit A (486 aa).

Residues Lys74 and Ser149 each act as charge relay system in the active site. Ser173 functions as the Acyl-ester intermediate in the catalytic mechanism.

It belongs to the amidase family. GatA subfamily. As to quaternary structure, heterotrimer of A, B and C subunits.

It catalyses the reaction L-glutamyl-tRNA(Gln) + L-glutamine + ATP + H2O = L-glutaminyl-tRNA(Gln) + L-glutamate + ADP + phosphate + H(+). Functionally, allows the formation of correctly charged Gln-tRNA(Gln) through the transamidation of misacylated Glu-tRNA(Gln) in organisms which lack glutaminyl-tRNA synthetase. The reaction takes place in the presence of glutamine and ATP through an activated gamma-phospho-Glu-tRNA(Gln). This chain is Glutamyl-tRNA(Gln) amidotransferase subunit A, found in Prochlorococcus marinus (strain NATL2A).